Consider the following 388-residue polypeptide: Lamin tail domain-containing protein 1 (388 aa).

The 119-residue stretch at 136-254 (EVGQFTSSSL…QAIAWYTPIH (119 aa)) folds into the LTD domain. Residues 349–388 (EPHNTSTAGGRLDRQPRTRSTRPNRASGSKKKKTSESQKQ) form a disordered region. Basic residues predominate over residues 365–381 (RTRSTRPNRASGSKKKK).

Belongs to the intermediate filament family.

This is Lamin tail domain-containing protein 1 (LMNTD1) from Homo sapiens (Human).